Reading from the N-terminus, the 672-residue chain is Glycine--tRNA ligase beta subunit (672 aa).

The protein belongs to the class-II aminoacyl-tRNA synthetase family. In terms of assembly, tetramer of two alpha and two beta subunits.

The protein resides in the cytoplasm. The enzyme catalyses tRNA(Gly) + glycine + ATP = glycyl-tRNA(Gly) + AMP + diphosphate. The chain is Glycine--tRNA ligase beta subunit (glyS) from Thermotoga maritima (strain ATCC 43589 / DSM 3109 / JCM 10099 / NBRC 100826 / MSB8).